Consider the following 158-residue polypeptide: 6,7-dimethyl-8-ribityllumazine synthase (158 aa).

5-amino-6-(D-ribitylamino)uracil is bound by residues phenylalanine 22, 57–59 (AYE), and 84–86 (TVI). 89–90 (GT) is a (2S)-2-hydroxy-3-oxobutyl phosphate binding site. The Proton donor role is filled by histidine 92. A 5-amino-6-(D-ribitylamino)uracil-binding site is contributed by phenylalanine 117. Arginine 131 is a (2S)-2-hydroxy-3-oxobutyl phosphate binding site.

It belongs to the DMRL synthase family. As to quaternary structure, forms an icosahedral capsid composed of 60 subunits, arranged as a dodecamer of pentamers.

It carries out the reaction (2S)-2-hydroxy-3-oxobutyl phosphate + 5-amino-6-(D-ribitylamino)uracil = 6,7-dimethyl-8-(1-D-ribityl)lumazine + phosphate + 2 H2O + H(+). It participates in cofactor biosynthesis; riboflavin biosynthesis; riboflavin from 2-hydroxy-3-oxobutyl phosphate and 5-amino-6-(D-ribitylamino)uracil: step 1/2. Catalyzes the formation of 6,7-dimethyl-8-ribityllumazine by condensation of 5-amino-6-(D-ribitylamino)uracil with 3,4-dihydroxy-2-butanone 4-phosphate. This is the penultimate step in the biosynthesis of riboflavin. The sequence is that of 6,7-dimethyl-8-ribityllumazine synthase from Pectobacterium carotovorum subsp. carotovorum (strain PC1).